A 123-amino-acid chain; its full sequence is Histone H2B (123 aa).

The disordered stretch occupies residues 1–31 (MPPKVASKGAKKAASKAKAARSGEKKKKRRR). Residues 9–31 (GAKKAASKAKAARSGEKKKKRRR) are compositionally biased toward basic residues. The O-linked (GlcNAc) serine glycan is linked to Ser110. Lys118 participates in a covalent cross-link: Glycyl lysine isopeptide (Lys-Gly) (interchain with G-Cter in ubiquitin).

This sequence belongs to the histone H2B family. In terms of assembly, the nucleosome is a histone octamer containing two molecules each of H2A, H2B, H3 and H4 assembled in one H3-H4 heterotetramer and two H2A-H2B heterodimers. The octamer wraps approximately 147 bp of DNA. In terms of processing, monoubiquitination of Lys-118 gives a specific tag for epigenetic transcriptional activation and is also prerequisite for histone H3 'Lys-4' and 'Lys-79' methylation. Post-translationally, glcNAcylation at Ser-110 promotes monoubiquitination of Lys-118. It fluctuates in response to extracellular glucose, and associates with transcribed genes.

It is found in the nucleus. The protein localises to the chromosome. Functionally, core component of nucleosome. Nucleosomes wrap and compact DNA into chromatin, limiting DNA accessibility to the cellular machineries which require DNA as a template. Histones thereby play a central role in transcription regulation, DNA repair, DNA replication and chromosomal stability. DNA accessibility is regulated via a complex set of post-translational modifications of histones, also called histone code, and nucleosome remodeling. The sequence is that of Histone H2B from Platynereis dumerilii (Dumeril's clam worm).